Here is a 368-residue protein sequence, read N- to C-terminus: D-alanine--D-alanine ligase (368 aa).

The ATP-grasp domain occupies 151–358; sequence KKLLAAEGLP…YGTLVSTLVD (208 aa). 179 to 234 provides a ligand contact to ATP; it reads RSRLHLPVFVKPARGGSSIGITRVAEWAALDDAIAHARRHDPKVIVESGIAGREVE. 3 residues coordinate Mg(2+): Asp-313, Glu-325, and Asn-327.

The protein belongs to the D-alanine--D-alanine ligase family. The cofactor is Mg(2+). It depends on Mn(2+) as a cofactor.

The protein localises to the cytoplasm. It catalyses the reaction 2 D-alanine + ATP = D-alanyl-D-alanine + ADP + phosphate + H(+). Its pathway is cell wall biogenesis; peptidoglycan biosynthesis. Cell wall formation. This is D-alanine--D-alanine ligase from Rhodococcus opacus (strain B4).